Here is a 458-residue protein sequence, read N- to C-terminus: tRNA modification GTPase MnmE (458 aa).

The (6S)-5-formyl-5,6,7,8-tetrahydrofolate site is built by Arg-30, Glu-90, and Lys-129. Residues 225-379 (GLSICLIGCP…LHQTIDTIIW (155 aa)) enclose the TrmE-type G domain. Residue Asn-235 participates in K(+) binding. Residues 235 to 240 (NVGKSS), 254 to 260 (SPIPGTT), and 279 to 282 (DTAG) contribute to the GTP site. A Mg(2+)-binding site is contributed by Ser-239. Positions 254, 256, and 259 each coordinate K(+). Thr-260 is a binding site for Mg(2+). Lys-458 serves as a coordination point for (6S)-5-formyl-5,6,7,8-tetrahydrofolate.

It belongs to the TRAFAC class TrmE-Era-EngA-EngB-Septin-like GTPase superfamily. TrmE GTPase family. Homodimer. Heterotetramer of two MnmE and two MnmG subunits. Requires K(+) as cofactor.

It localises to the cytoplasm. Exhibits a very high intrinsic GTPase hydrolysis rate. Involved in the addition of a carboxymethylaminomethyl (cmnm) group at the wobble position (U34) of certain tRNAs, forming tRNA-cmnm(5)s(2)U34. In Protochlamydia amoebophila (strain UWE25), this protein is tRNA modification GTPase MnmE.